The following is a 462-amino-acid chain: Dipeptidyl peptidase 1 (462 aa).

A signal peptide spans 1–24 (MGPWTHSLRAALLLVLLGVCTVSS). Residues Asn29 and Asn53 are each glycosylated (N-linked (GlcNAc...) asparagine). 2 disulfide bridges follow: Cys30/Cys118 and Cys54/Cys136. Residues 135 to 229 (ACFVGKKMAN…TDEIQQQILS (95 aa)) constitute a propeptide that is removed on maturation. N-linked (GlcNAc...) asparagine glycosylation occurs at Asn144. 3 disulfides stabilise this stretch: Cys254–Cys297, Cys290–Cys330, and Cys320–Cys336. The active site involves Cys257. Asn275 carries an N-linked (GlcNAc...) asparagine glycan. Chloride contacts are provided by Phe301 and Tyr303. A chloride-binding site is contributed by Tyr346. Residues His404 and Asn426 contribute to the active site.

It belongs to the peptidase C1 family. In terms of assembly, tetramer of heterotrimers consisting of exclusion domain, heavy- and light chains. Requires chloride as cofactor. Broadly distributed, but higher levels found in liver, spleen, intestine, lung and kidney.

Its subcellular location is the lysosome. The catalysed reaction is Release of an N-terminal dipeptide, Xaa-Yaa-|-Zaa-, except when Xaa is Arg or Lys, or Yaa or Zaa is Pro.. Thiol protease. Has dipeptidylpeptidase activity. Active against a broad range of dipeptide substrates composed of both polar and hydrophobic amino acids. Proline cannot occupy the P1 position and arginine cannot occupy the P2 position of the substrate. Can act as both an exopeptidase and endopeptidase. Activates serine proteases such as elastase, cathepsin G and granzymes A and B. The polypeptide is Dipeptidyl peptidase 1 (Ctsc) (Rattus norvegicus (Rat)).